The chain runs to 655 residues: Very long-chain specific acyl-CoA dehydrogenase, mitochondrial (655 aa).

A mitochondrion-targeting transit peptide spans 1-40; it reads MQSARMTPSVGRQLLRLGARSSRSAALQGQPRPTSAQRLY. A disordered region spans residues 1-70; that stretch reads MQSARMTPSV…TREKPARAES (70 aa). Residues 21–37 show a composition bias toward polar residues; it reads SSRSAALQGQPRPTSAQ. Residues 41–482 form a catalytic region; the sequence is ASEATQAVLE…ALQGCMDKGK (442 aa). Lys51 is subject to N6-acetyllysine. Basic and acidic residues predominate over residues 60-70; that stretch reads STREKPARAES. 2 positions are modified to N6-acetyllysine; alternate: Lys71 and Lys127. 2 positions are modified to N6-succinyllysine; alternate: Lys71 and Lys127. Lys195 carries the N6-succinyllysine modification. 214–223 is an FAD binding site; that stretch reads FCLTEPSSGS. Cys237 carries the S-nitrosocysteine modification. Lys239 bears the N6-acetyllysine; alternate mark. Lys239 carries the post-translational modification N6-succinyllysine; alternate. Residue 249 to 251 participates in FAD binding; that stretch reads WIS. Lys268 is subject to N6-succinyllysine. Lys276 and Lys278 each carry N6-acetyllysine; alternate. N6-succinyllysine; alternate occurs at positions 276 and 278. Lys298 and Lys316 each carry N6-acetyllysine. An N6-acetyllysine; alternate modification is found at Lys331. N6-succinyllysine; alternate is present on Lys331. Lys372 is subject to N6-succinyllysine. 461–463 is a substrate binding site; sequence FEG. The active-site Proton acceptor is Glu462. 464–466 is a binding site for FAD; it reads TND. Lys482 bears the N6-acetyllysine; alternate mark. At Lys482 the chain carries N6-succinyllysine; alternate. Residues 483–516 form a membrane-anchoring region; it reads ELTGLGNALKNPLGNVGLLIGEASKQLRRRTGIG. A phosphoserine mark is found at Ser517 and Ser522. Lys550 carries the post-translational modification N6-acetyllysine. At Lys556 the chain carries N6-acetyllysine; alternate. Lys556 is subject to N6-succinyllysine; alternate. Gln562 is an FAD binding site. N6-succinyllysine is present on Lys639.

The protein belongs to the acyl-CoA dehydrogenase family. Homodimer. Homodimerizes after import into the mitochondrion. Requires FAD as cofactor. In terms of processing, S-nitrosylation at Cys-237 in liver improves catalytic efficiency. Widely expressed (at protein level).

It is found in the mitochondrion inner membrane. It carries out the reaction a very-long-chain 2,3-saturated fatty acyl-CoA + oxidized [electron-transfer flavoprotein] + H(+) = a very-long-chain (2E)-enoyl-CoA + reduced [electron-transfer flavoprotein]. It catalyses the reaction dodecanoyl-CoA + oxidized [electron-transfer flavoprotein] + H(+) = (2E)-dodecenoyl-CoA + reduced [electron-transfer flavoprotein]. The catalysed reaction is tetradecanoyl-CoA + oxidized [electron-transfer flavoprotein] + H(+) = (2E)-tetradecenoyl-CoA + reduced [electron-transfer flavoprotein]. The enzyme catalyses oxidized [electron-transfer flavoprotein] + hexadecanoyl-CoA + H(+) = (2E)-hexadecenoyl-CoA + reduced [electron-transfer flavoprotein]. It carries out the reaction octadecanoyl-CoA + oxidized [electron-transfer flavoprotein] + H(+) = (2E)-octadecenoyl-CoA + reduced [electron-transfer flavoprotein]. It catalyses the reaction eicosanoyl-CoA + oxidized [electron-transfer flavoprotein] + H(+) = (2E)-eicosenoyl-CoA + reduced [electron-transfer flavoprotein]. The catalysed reaction is docosanoyl-CoA + oxidized [electron-transfer flavoprotein] + H(+) = (2E)-docosenoyl-CoA + reduced [electron-transfer flavoprotein]. The enzyme catalyses tetracosanoyl-CoA + oxidized [electron-transfer flavoprotein] + H(+) = (2E)-tetracosenoyl-CoA + reduced [electron-transfer flavoprotein]. The protein operates within lipid metabolism; mitochondrial fatty acid beta-oxidation. Its function is as follows. Very long-chain specific acyl-CoA dehydrogenase is one of the acyl-CoA dehydrogenases that catalyze the first step of mitochondrial fatty acid beta-oxidation, an aerobic process breaking down fatty acids into acetyl-CoA and allowing the production of energy from fats. The first step of fatty acid beta-oxidation consists in the removal of one hydrogen from C-2 and C-3 of the straight-chain fatty acyl-CoA thioester, resulting in the formation of trans-2-enoyl-CoA. Among the different mitochondrial acyl-CoA dehydrogenases, very long-chain specific acyl-CoA dehydrogenase acts specifically on acyl-CoAs with saturated 12 to 24 carbons long primary chains. This Rattus norvegicus (Rat) protein is Very long-chain specific acyl-CoA dehydrogenase, mitochondrial.